Here is a 380-residue protein sequence, read N- to C-terminus: Queuine tRNA-ribosyltransferase (380 aa).

D96 functions as the Proton acceptor in the catalytic mechanism. Substrate contacts are provided by residues 96-100, D150, Q193, and G220; that span reads DSGGF. Residues 251-257 are RNA binding; that stretch reads GVGAPDS. The active-site Nucleophile is the D270. Residues 275-279 form an RNA binding; important for wobble base 34 recognition region; that stretch reads TRIAR. The Zn(2+) site is built by C308, C310, C313, and H339.

This sequence belongs to the queuine tRNA-ribosyltransferase family. Homodimer. Within each dimer, one monomer is responsible for RNA recognition and catalysis, while the other monomer binds to the replacement base PreQ1. Zn(2+) serves as cofactor.

The enzyme catalyses 7-aminomethyl-7-carbaguanine + guanosine(34) in tRNA = 7-aminomethyl-7-carbaguanosine(34) in tRNA + guanine. Its pathway is tRNA modification; tRNA-queuosine biosynthesis. Catalyzes the base-exchange of a guanine (G) residue with the queuine precursor 7-aminomethyl-7-deazaguanine (PreQ1) at position 34 (anticodon wobble position) in tRNAs with GU(N) anticodons (tRNA-Asp, -Asn, -His and -Tyr). Catalysis occurs through a double-displacement mechanism. The nucleophile active site attacks the C1' of nucleotide 34 to detach the guanine base from the RNA, forming a covalent enzyme-RNA intermediate. The proton acceptor active site deprotonates the incoming PreQ1, allowing a nucleophilic attack on the C1' of the ribose to form the product. After dissociation, two additional enzymatic reactions on the tRNA convert PreQ1 to queuine (Q), resulting in the hypermodified nucleoside queuosine (7-(((4,5-cis-dihydroxy-2-cyclopenten-1-yl)amino)methyl)-7-deazaguanosine). The chain is Queuine tRNA-ribosyltransferase from Streptococcus thermophilus (strain CNRZ 1066).